A 324-amino-acid chain; its full sequence is Lipoyl synthase (324 aa).

7 residues coordinate [4Fe-4S] cluster: C71, C76, C82, C97, C101, C104, and S311. Positions 83 to 300 constitute a Radical SAM core domain; that stretch reads FGHGTATFLI…GDKAREMGFT (218 aa).

This sequence belongs to the radical SAM superfamily. Lipoyl synthase family. The cofactor is [4Fe-4S] cluster.

The protein resides in the cytoplasm. The catalysed reaction is [[Fe-S] cluster scaffold protein carrying a second [4Fe-4S](2+) cluster] + N(6)-octanoyl-L-lysyl-[protein] + 2 oxidized [2Fe-2S]-[ferredoxin] + 2 S-adenosyl-L-methionine + 4 H(+) = [[Fe-S] cluster scaffold protein] + N(6)-[(R)-dihydrolipoyl]-L-lysyl-[protein] + 4 Fe(3+) + 2 hydrogen sulfide + 2 5'-deoxyadenosine + 2 L-methionine + 2 reduced [2Fe-2S]-[ferredoxin]. The protein operates within protein modification; protein lipoylation via endogenous pathway; protein N(6)-(lipoyl)lysine from octanoyl-[acyl-carrier-protein]: step 2/2. In terms of biological role, catalyzes the radical-mediated insertion of two sulfur atoms into the C-6 and C-8 positions of the octanoyl moiety bound to the lipoyl domains of lipoate-dependent enzymes, thereby converting the octanoylated domains into lipoylated derivatives. The sequence is that of Lipoyl synthase from Nitrosococcus oceani (strain ATCC 19707 / BCRC 17464 / JCM 30415 / NCIMB 11848 / C-107).